The sequence spans 145 residues: Ribosome maturation factor RimP (145 aa).

It belongs to the RimP family.

It is found in the cytoplasm. Functionally, required for maturation of 30S ribosomal subunits. This chain is Ribosome maturation factor RimP, found in Borreliella burgdorferi (strain ZS7) (Borrelia burgdorferi).